Reading from the N-terminus, the 205-residue chain is Ribonuclease HII (205 aa).

In terms of domain architecture, RNase H type-2 spans 15–205 (SRVCGIDEAG…SFKLRKLGEK (191 aa)). A divalent metal cation is bound by residues Asp-21, Glu-22, and Asp-117.

Belongs to the RNase HII family. Mn(2+) serves as cofactor. Mg(2+) is required as a cofactor.

It localises to the cytoplasm. The catalysed reaction is Endonucleolytic cleavage to 5'-phosphomonoester.. Its function is as follows. Endonuclease that specifically degrades the RNA of RNA-DNA hybrids. The sequence is that of Ribonuclease HII from Chlorobaculum parvum (strain DSM 263 / NCIMB 8327) (Chlorobium vibrioforme subsp. thiosulfatophilum).